We begin with the raw amino-acid sequence, 439 residues long: ATP-dependent RNA helicase SUB2 (439 aa).

Acidic residues predominate over residues 1 to 19 (MSHEGEEDLLEYSDNEQEI). Residues 1–48 (MSHEGEEDLLEYSDNEQEIQVDNKETAVEGTTENEATQENGEADKKGS) form a disordered region. The segment covering 29–40 (EGTTENEATQEN) has biased composition (polar residues). A Q motif motif is present at residues 55-83 (TGFKDFLLKPELSRAIIDCGFEHPSEVQQ). The region spanning 86 to 261 (IPQSIHGTDV…RRFLQNPLEI (176 aa)) is the Helicase ATP-binding domain. 99 to 106 (AKSGLGKT) lines the ATP pocket. The DECD box signature appears at 208–211 (DECD). Residues 273 to 434 (GLQQYYIKLE…EFPEEGIDPS (162 aa)) enclose the Helicase C-terminal domain.

The protein belongs to the DEAD box helicase family. DECD subfamily.

Its subcellular location is the nucleus. It catalyses the reaction ATP + H2O = ADP + phosphate + H(+). ATP-binding RNA helicase involved in transcription elongation and required for the export of mRNA out of the nucleus. SUB2 also plays a role in pre-mRNA splicing and spliceosome assembly. May be involved in rDNA and telomeric silencing, and maintenance of genome integrity. In Candida glabrata (strain ATCC 2001 / BCRC 20586 / JCM 3761 / NBRC 0622 / NRRL Y-65 / CBS 138) (Yeast), this protein is ATP-dependent RNA helicase SUB2 (SUB2).